Here is a 502-residue protein sequence, read N- to C-terminus: Maturase K (502 aa).

The protein belongs to the intron maturase 2 family. MatK subfamily.

It localises to the plastid. The protein resides in the chloroplast. Usually encoded in the trnK tRNA gene intron. Probably assists in splicing its own and other chloroplast group II introns. The protein is Maturase K of Sisymbrium irio (London rocket).